We begin with the raw amino-acid sequence, 226 residues long: Leucyl/phenylalanyl-tRNA--protein transferase (226 aa).

Belongs to the L/F-transferase family.

Its subcellular location is the cytoplasm. It carries out the reaction N-terminal L-lysyl-[protein] + L-leucyl-tRNA(Leu) = N-terminal L-leucyl-L-lysyl-[protein] + tRNA(Leu) + H(+). The catalysed reaction is N-terminal L-arginyl-[protein] + L-leucyl-tRNA(Leu) = N-terminal L-leucyl-L-arginyl-[protein] + tRNA(Leu) + H(+). The enzyme catalyses L-phenylalanyl-tRNA(Phe) + an N-terminal L-alpha-aminoacyl-[protein] = an N-terminal L-phenylalanyl-L-alpha-aminoacyl-[protein] + tRNA(Phe). In terms of biological role, functions in the N-end rule pathway of protein degradation where it conjugates Leu, Phe and, less efficiently, Met from aminoacyl-tRNAs to the N-termini of proteins containing an N-terminal arginine or lysine. The chain is Leucyl/phenylalanyl-tRNA--protein transferase from Salinibacter ruber (strain DSM 13855 / M31).